We begin with the raw amino-acid sequence, 296 residues long: Protoheme IX farnesyltransferase (296 aa).

The Cytoplasmic segment spans residues methionine 1–valine 9. A helical transmembrane segment spans residues threonine 10–leucine 28. At alanine 29 to proline 37 the chain is on the periplasmic side. A helical membrane pass occupies residues leucine 38–phenylalanine 56. Residues asparagine 57–lysine 78 lie on the Cytoplasmic side of the membrane. The chain crosses the membrane as a helical span at residues glycine 79–glycine 97. Topologically, residues phenylalanine 98 to proline 107 are periplasmic. A helical membrane pass occupies residues leucine 108–leucine 126. Residues tyrosine 127 to proline 197 are Cytoplasmic-facing. The helical transmembrane segment at valine 198 to phenylalanine 216 threads the bilayer. The Periplasmic portion of the chain corresponds to alanine 217 to tyrosine 228. A helical membrane pass occupies residues alanine 229 to methionine 247. Residues alanine 248–serine 268 lie on the Cytoplasmic side of the membrane. Residues isoleucine 269–aspartate 287 form a helical membrane-spanning segment. Topologically, residues serine 288–tryptophan 296 are periplasmic.

This sequence belongs to the UbiA prenyltransferase family. Protoheme IX farnesyltransferase subfamily.

It is found in the cell inner membrane. The catalysed reaction is heme b + (2E,6E)-farnesyl diphosphate + H2O = Fe(II)-heme o + diphosphate. Its pathway is porphyrin-containing compound metabolism; heme O biosynthesis; heme O from protoheme: step 1/1. Its function is as follows. Converts heme B (protoheme IX) to heme O by substitution of the vinyl group on carbon 2 of heme B porphyrin ring with a hydroxyethyl farnesyl side group. The protein is Protoheme IX farnesyltransferase of Shigella flexneri.